The following is a 161-amino-acid chain: Ribonuclease P protein component 2 (161 aa).

It belongs to the eukaryotic/archaeal RNase P protein component 2 family. Consists of a catalytic RNA component and at least 4-5 protein subunits.

Its subcellular location is the cytoplasm. The catalysed reaction is Endonucleolytic cleavage of RNA, removing 5'-extranucleotides from tRNA precursor.. Part of ribonuclease P, a protein complex that generates mature tRNA molecules by cleaving their 5'-ends. In Haloarcula marismortui (strain ATCC 43049 / DSM 3752 / JCM 8966 / VKM B-1809) (Halobacterium marismortui), this protein is Ribonuclease P protein component 2.